The sequence spans 443 residues: D(2) dopamine receptor (443 aa).

The Extracellular portion of the chain corresponds to 1-37; the sequence is MDPLNLSWYDDDLESQNWSRPFNGSEGKPGKPHYNYY. N-linked (GlcNAc...) asparagine glycosylation is found at Asn5, Asn17, and Asn23. A helical transmembrane segment spans residues 38-60; it reads AMLLTLLIFIIVFGNVLVCMAVS. Over 61–70 the chain is Cytoplasmic; that stretch reads REKALQTTTN. Residues 71-93 traverse the membrane as a helical segment; the sequence is YLIVSLAVADLLVATLVMPWVVY. Topologically, residues 94–108 are extracellular; it reads LEVVGEWKFSRIHCD. A disulfide bridge connects residues Cys107 and Cys182. A helical transmembrane segment spans residues 109–130; that stretch reads IFVTLDVMMCTASILNLCAISI. Residues 131-151 lie on the Cytoplasmic side of the membrane; it reads DRYTAVAMPMLYNTRYSSKRR. A helical membrane pass occupies residues 152–172; the sequence is VTVMIAIVWVLSFTISCPLLF. The Extracellular segment spans residues 173 to 188; sequence GLNNTDQNECIIANPA. The chain crosses the membrane as a helical span at residues 189 to 213; that stretch reads FVVYSSIVSFYVPFIVTLLVYIKIY. Positions 211 to 373 are interaction with PPP1R9B; sequence KIYIVLRRRR…SQQKEKKATQ (163 aa). At 214-373 the chain is on the cytoplasmic side; the sequence is IVLRRRRKRV…SQQKEKKATQ (160 aa). Positions 282 to 332 are disordered; the sequence is EMLSSTSPPERTRYSPIPPSHHQLTLPDPSHHGLHSTADSPAKPEKNGHAK. Residues 323 to 332 are compositionally biased toward basic and acidic residues; the sequence is AKPEKNGHAK. A helical transmembrane segment spans residues 374 to 395; sequence MLAIVLGVFIICWLPFFITHIL. The Extracellular portion of the chain corresponds to 396-409; that stretch reads NIHCECNIPPVLYS. Cys399 and Cys401 are joined by a disulfide. The helical transmembrane segment at 410–431 threads the bilayer; that stretch reads AFTWLGYVNSAVNPIIYTTFNI. Residues 432 to 443 lie on the Cytoplasmic side of the membrane; the sequence is EFRKAFLKILHC. Cys443 is lipidated: S-palmitoyl cysteine.

It belongs to the G-protein coupled receptor 1 family. As to quaternary structure, forms homo- and heterooligomers with DRD4. The interaction with DRD4 may modulate agonist-induced downstream signaling. Interacts with CADPS and CADPS2. Interacts with GPRASP1, PPP1R9B and CLIC6. Interacts with ARRB2. Interacts with HTR2A. Interacts with DRD1. Interacts with KCNA2. Post-translationally, palmitoylated. Palmitoylation which is required for proper localization to the plasma membrane and stability of the receptor could be carried on by ZDHHC4, ZDHHC3 and ZDHHC8.

It localises to the cell membrane. The protein localises to the golgi apparatus membrane. Dopamine receptor whose activity is mediated by G proteins which inhibit adenylyl cyclase. Positively regulates postnatal regression of retinal hyaloid vessels via suppression of VEGFR2/KDR activity, downstream of OPN5. This Canis lupus familiaris (Dog) protein is D(2) dopamine receptor (DRD2).